Here is a 510-residue protein sequence, read N- to C-terminus: G-protein coupled receptor dmsr-1 (510 aa).

Residues 1–35 are Extracellular-facing; that stretch reads MEFTECKTTFIHLPDKSFLYDVFVSVYNFYHPIHA. A helical transmembrane segment spans residues 36-56; sequence YLSIFLCVLGTIANFCNIVVL. At 57–64 the chain is on the cytoplasmic side; it reads TRRTMRTP. A helical membrane pass occupies residues 65 to 85; the sequence is VNMILTAMASCDTVVLFSNLI. The Extracellular segment spans residues 86-107; it reads YTTHYSFVAFKFCHPKHWSYSW. The helical transmembrane segment at 108-128 threads the bilayer; that stretch reads ALFLIAHAHLSLVAHSSSVWL. At 129 to 155 the chain is on the cytoplasmic side; sequence SVMLALVRYVTLRSRGNMGGMQVTLRH. A helical membrane pass occupies residues 156–176; that stretch reads SYYAVAVTVSLVAVLNAPNFL. At 177–223 the chain is on the extracellular side; it reads NYKINEQPLNETCTDLDPMFWNSPAYLPGIADIAKANSCLVFRLSYW. N-linked (GlcNAc...) asparagine glycosylation is present at Asn186. A helical transmembrane segment spans residues 224 to 244; sequence ISGMVFKVLPCALLSLFVWLL. Over 245-307 the chain is Cytoplasmic; it reads LRILREVREN…GERVDRTTHM (63 aa). Residues 308–328 form a helical membrane-spanning segment; it reads LLAIVAVMLVTELPQGIMAVL. Residues 329-343 lie on the Extracellular side of the membrane; the sequence is SGMCSEEFRIYIYNN. A helical membrane pass occupies residues 344 to 364; that stretch reads LGDILDLFSLCGSCCSFIIYC. The Cytoplasmic segment spans residues 365–510; that stretch reads SMSGQFRNEF…DGIRGHFQNI (146 aa). Residues 452–510 are disordered; sequence GCDSITPCSPMPTSFPSSPLPPIRSGEDESTDETSHLLNSSGPNSTASADGIRGHFQNI. The span at 487–499 shows a compositional bias: polar residues; that stretch reads HLLNSSGPNSTAS.

The protein belongs to the G-protein coupled receptor 1 family. In terms of tissue distribution, expressed in head neurons including the RID neuron and the paired AIY neurons, and in tail neurons including the paired PHA and PHB neurons. Not expressed in AVE and AVA neurons.

Its subcellular location is the cell membrane. In terms of biological role, G-protein coupled receptor. Functionally, G-protein coupled receptor for flp-13 RFamide neuropeptides in vitro. Upon activation by flp-13 RFamide neuropeptides, promotes sleep in response to cellular stress also known as stress-induced sleep (SIS), probably by inhibiting the activity of wake-promoting neurons. The polypeptide is G-protein coupled receptor dmsr-1 (Caenorhabditis elegans).